A 570-amino-acid chain; its full sequence is Probable metalloreductase AIM14 (570 aa).

Over 1-20 (MKESPLITLVKRHSETHFAN) the chain is Extracellular. A helical transmembrane segment spans residues 21-41 (IKYGYYVLIISLVYLIGLALL). Residues 42–69 (RAFGRRTPSRSSSAFKNKIIYRLYDIDP) are Cytoplasmic-facing. The chain crosses the membrane as a helical span at residues 70-90 (AIHLGILFFAVLIPFYYHYSL). Over 91–141 (TTQSTVYLKRLGRLSYALIPLNLFLTLRPNWFLRKNCTYTDFIPFHKWFSR) the chain is Extracellular. The Ferric oxidoreductase domain maps to 101–219 (LGRLSYALIP…NLVNVAFILL (119 aa)). The helical transmembrane segment at 142–162 (IITVIGLLHGIFFIIKWAIDD) threads the bilayer. The Cytoplasmic segment spans residues 163–176 (NVSLKQKLILKTFN). The chain crosses the membrane as a helical span at residues 177–197 (FAGFIISILVLFLLICSIGPM). Residues 198 to 373 (RRYNYRLFYI…PEECYSQGTN (176 aa)) are Extracellular-facing. One can recognise an FAD-binding FR-type domain in the interval 250 to 388 (FAKSLMILNK…GGSGISFALP (139 aa)). The helical transmembrane segment at 374–394 (IAIICGGSGISFALPLFRHFF) threads the bilayer. Topologically, residues 395 to 570 (NKENVKYLKM…INFVCETYGL (176 aa)) are cytoplasmic. The segment covering 480 to 505 (ISNFNSENADSNDNTPETSHSPTKEN) has biased composition (polar residues). The interval 480 to 509 (ISNFNSENADSNDNTPETSHSPTKENGSMI) is disordered.

Belongs to the ferric reductase (FRE) family. AIM14 subfamily. In terms of assembly, interacts with ribosomes.

The protein localises to the membrane. Its function is as follows. Probable cell surface metalloreductase. May be involved in iron or copper homeostasis. This Saccharomyces cerevisiae (strain ATCC 204508 / S288c) (Baker's yeast) protein is Probable metalloreductase AIM14 (AIM14).